A 378-amino-acid polypeptide reads, in one-letter code: Transcription elongation factor TFIIS (378 aa).

The residue at position 1 (Met-1) is an N-acetylmethionine. Positions 10–89 (EGAKKAADAA…EIWKKVVIEE (80 aa)) constitute a TFIIS N-terminal domain. Residues 210–333 (VRDKIRELLV…DCERGLAAKA (124 aa)) form the TFIIS central domain. A TFIIS-type zinc finger spans residues 336-376 (DQFKCGRCGQRKCTYYQMQTRSADEPMTTYVTCVNCDNHWK). Positions 340, 343, 368, and 371 each coordinate Zn(2+).

In terms of tissue distribution, expressed in roots, leaves and flowers.

It is found in the nucleus. Its function is as follows. Necessary for efficient RNA polymerase II transcription elongation past template-encoded arresting sites. Involved in the control of seed dormancy and germination. This chain is Transcription elongation factor TFIIS, found in Arabidopsis thaliana (Mouse-ear cress).